Here is a 48-residue protein sequence, read N- to C-terminus: ALLSCKCEANSGYGDKWLFHGGCPNGYGYNERCFIKPGAVCCYPPSGR.

Cystine bridges form between cysteine 5–cysteine 41, cysteine 7–cysteine 33, and cysteine 23–cysteine 42. Residue serine 46 is modified to Serine amide. A propeptide spans 47–48 (GR) (removed in mature form).

Belongs to the sea anemone type 3 (BDS) potassium channel toxin family.

Its subcellular location is the secreted. Its function is as follows. Neurotoxin that induces paralysis when injected into crabs. May function in antimicrobial activity as it displays inhibitory activity towards the B.licheniformis enzyme subtilisin A (SUBTA) and the recombinant S.maltophilia protease 1 (rStmPr1) enzyme. Also displays inhibitory activity against various proteases including the porcine pancreatic elastase (PPE) and proteinase K (PK). In Condylactis gigantea (Giant Caribbean anemone), this protein is U-actitoxin-Cgg3.